The chain runs to 461 residues: Ornithine decarboxylase (461 aa).

Residue K69 is modified to N6-(pyridoxal phosphate)lysine. Pyridoxal 5'-phosphate contacts are provided by residues S200, G237, and 274-277; that span reads EPGR. S303 is modified (phosphoserine; by CK2). 331–332 is a binding site for substrate; the sequence is YD. C360 (proton donor; shared with dimeric partner) is an active-site residue. C360 is modified (S-nitrosocysteine; in inhibited form). A substrate-binding site is contributed by D361. Residue Y389 participates in pyridoxal 5'-phosphate binding.

Belongs to the Orn/Lys/Arg decarboxylase class-II family. In terms of assembly, homodimer. Only the dimer is catalytically active, as the active sites are constructed of residues from both monomers. Does not form a heterodimer with AZIN2. Pyridoxal 5'-phosphate is required as a cofactor. In terms of processing, S-Nitrosylation inhibits the enzyme. S-Nitrosylated in vitro on 4 cysteine residues.

The catalysed reaction is L-ornithine + H(+) = putrescine + CO2. It functions in the pathway amine and polyamine biosynthesis; putrescine biosynthesis via L-ornithine pathway; putrescine from L-ornithine: step 1/1. With respect to regulation, inhibited by S-nitrosylation. Inhibited by antizymes (AZs) OAZ1, OAZ2 and OAZ3 in response to polyamine levels. AZs inhibit the assembly of the functional homodimer by binding to ODC monomers. Additionally, OAZ1 targets ODC monomers for ubiquitin-independent proteolytic destruction by the 26S proteasome. Inhibited by 1-amino-oxy-3-aminopropane (APA, an isosteric analog of putrescine). Irreversibly inhibited by alpha-difluoromethylornithine (DFMO). Functionally, catalyzes the first and rate-limiting step of polyamine biosynthesis that converts ornithine into putrescine, which is the precursor for the polyamines, spermidine and spermine. Polyamines are essential for cell proliferation and are implicated in cellular processes, ranging from DNA replication to apoptosis. In Homo sapiens (Human), this protein is Ornithine decarboxylase (ODC1).